The primary structure comprises 255 residues: ParA family protein TC_0871 (255 aa).

It belongs to the ParA family.

The sequence is that of ParA family protein TC_0871 from Chlamydia muridarum (strain MoPn / Nigg).